The primary structure comprises 329 residues: Glycerol-3-phosphate dehydrogenase [NAD(P)+] (329 aa).

3 residues coordinate NADPH: tryptophan 11, arginine 30, and lysine 103. 3 residues coordinate sn-glycerol 3-phosphate: lysine 103, glycine 132, and serine 134. Position 136 (alanine 136) interacts with NADPH. Residues lysine 187, aspartate 240, serine 250, arginine 251, and asparagine 252 each coordinate sn-glycerol 3-phosphate. The Proton acceptor role is filled by lysine 187. Residue arginine 251 participates in NADPH binding. NADPH-binding residues include valine 275 and glutamate 277.

It belongs to the NAD-dependent glycerol-3-phosphate dehydrogenase family.

The protein localises to the cytoplasm. The catalysed reaction is sn-glycerol 3-phosphate + NAD(+) = dihydroxyacetone phosphate + NADH + H(+). The enzyme catalyses sn-glycerol 3-phosphate + NADP(+) = dihydroxyacetone phosphate + NADPH + H(+). The protein operates within membrane lipid metabolism; glycerophospholipid metabolism. Its function is as follows. Catalyzes the reduction of the glycolytic intermediate dihydroxyacetone phosphate (DHAP) to sn-glycerol 3-phosphate (G3P), the key precursor for phospholipid synthesis. This Methylobacillus flagellatus (strain ATCC 51484 / DSM 6875 / VKM B-1610 / KT) protein is Glycerol-3-phosphate dehydrogenase [NAD(P)+].